A 367-amino-acid chain; its full sequence is ABI gene family member 3 (367 aa).

A coiled-coil region spans residues 36 to 64 (CEDNYLQATDKRKALEETMAFTTQALASV). The tract at residues 163–273 (LSRTGTLSRK…LEVSQPPLEA (111 aa)) is disordered. Positions 206–225 (SAASSASSLASAGSAEGASG) are enriched in low complexity. Phosphoserine is present on residues serine 216 and serine 219. The segment covering 236–264 (ATPPPPPVAPVTPPPPPLSAEVFLPPPPL) has biased composition (pro residues). Residues 309-367 (SYLEKVVTLYPYTRQKDNELSFSEGTVICVTRRYSDGWCEGVSSEGTGFFPGNYVEPSC) enclose the SH3 domain. Residue serine 343 is modified to Phosphoserine.

This sequence belongs to the ABI family. May interact with PAK1 and PAK2. Probably interacts with TARSH.

It localises to the cytoplasm. In terms of biological role, inhibits ectopic tumor cell metastasis of SRD cells. In vitro, reduces cell motility. The sequence is that of ABI gene family member 3 (Abi3) from Mus musculus (Mouse).